A 77-amino-acid polypeptide reads, in one-letter code: U18-lycotoxin-Ls1a (77 aa).

Positions 1–22 (MSPKMQALLLLLGLITLLVVHA) are cleaved as a signal peptide. The propeptide occupies 23–34 (EEELSENTESER). Intrachain disulfides connect Cys-36–Cys-51, Cys-43–Cys-56, Cys-50–Cys-67, and Cys-58–Cys-65.

It belongs to the neurotoxin 02 (plectoxin) family. In terms of tissue distribution, expressed by the venom gland.

The protein resides in the secreted. In Lycosa singoriensis (Wolf spider), this protein is U18-lycotoxin-Ls1a.